An 86-amino-acid polypeptide reads, in one-letter code: Small ribosomal subunit protein bS16 (86 aa).

The protein belongs to the bacterial ribosomal protein bS16 family.

In Hamiltonella defensa subsp. Acyrthosiphon pisum (strain 5AT), this protein is Small ribosomal subunit protein bS16.